The sequence spans 184 residues: Protein DMP2 (184 aa).

Transmembrane regions (helical) follow at residues 19–39 (LIKL…PVLT), 45–65 (LLIN…SCCF), 105–125 (VGDF…SLLD), and 142–162 (IFLM…FTVF).

The protein belongs to the plant DMP1 protein family. Expressed constitutively in leaves, stems, flowers, siliques and roots.

Its subcellular location is the endoplasmic reticulum membrane. The protein resides in the vacuole membrane. Its function is as follows. Involved in membrane remodeling. The chain is Protein DMP2 from Arabidopsis thaliana (Mouse-ear cress).